The chain runs to 442 residues: 3-oxoacyl-[acyl-carrier-protein] synthase homolog (442 aa).

The region spanning 2 to 438 (SRRVVITGLG…GVNTSLLFKK (437 aa)) is the Ketosynthase family 3 (KS3) domain. Residues C187, H322, and H362 each act as for beta-ketoacyl synthase activity in the active site.

This sequence belongs to the thiolase-like superfamily. Beta-ketoacyl-ACP synthases family.

It localises to the mitochondrion. The enzyme catalyses a fatty acyl-[ACP] + malonyl-[ACP] + H(+) = a 3-oxoacyl-[ACP] + holo-[ACP] + CO2. Possibly involved in the synthesis of a specialized molecule, probably related to a fatty acid, which is essential for mitochondrial respiration. Is essential for oxygen uptake and the presence of cytochromes A and B. This Saccharomyces cerevisiae (strain ATCC 204508 / S288c) (Baker's yeast) protein is 3-oxoacyl-[acyl-carrier-protein] synthase homolog (CEM1).